The primary structure comprises 331 residues: L-lactate dehydrogenase A chain (331 aa).

Residues 29 to 57 and arginine 98 each bind NAD(+); that span reads GMVGMASAISILLKDLCDELAMVDVMEDK. Substrate-binding residues include arginine 105, asparagine 137, and arginine 168. NAD(+) is bound at residue asparagine 137. Catalysis depends on histidine 192, which acts as the Proton acceptor. Threonine 247 lines the substrate pocket.

It belongs to the LDH/MDH superfamily. LDH family. In terms of assembly, homotetramer.

It localises to the cytoplasm. The enzyme catalyses (S)-lactate + NAD(+) = pyruvate + NADH + H(+). It functions in the pathway fermentation; pyruvate fermentation to lactate; (S)-lactate from pyruvate: step 1/1. Interconverts simultaneously and stereospecifically pyruvate and lactate with concomitant interconversion of NADH and NAD(+). The sequence is that of L-lactate dehydrogenase A chain (ldha) from Paranotothenia magellanica (Maori cod).